Reading from the N-terminus, the 513-residue chain is MQSVTVLDFGSQYTQLIARRIRELGIYSEILPYNASPETIREHDPKAIILSGGPTSVYGDSALLPDGGVFMLGVPVLGICYGLQAIAKHFGGEVAGSSKQEFGRAKMLVSHNEESESPLFRNIPDSDVWMSHGDKVVRLPEGFRVTASSENSEMCALESYGSKAALKVYGLQFHPEVQHTLYGKQLLSNFLIDIAGIKPDWSPKSFIGHQIEEIRARAGKDKVICGISGGVDSTVAAVLVSQAIGKQLHCVFVDNGLLRKNEAVKVMNFLKPLGLSVTLADASDLFLKRLDKVASPEKKRKIIGRTFIHVFEQHLNEEKYLVQGTLYPDVIESVSVKGPSETIKSHHNVGGLPKRMKLKLIEPLRELFKDEVRAVGRELGIAEDILMRHPFPGPGLAVRVLGSVSRPRLDILREADEIFIEELKTSGLYQHVWQAFSVLLPVQSVGVMGDKRTYENVLALRAVESTDGMTADWAQLPHDFLARVSNRIINEVRGINRVAYDISSKPPATIEWE.

One can recognise a Glutamine amidotransferase type-1 domain in the interval 3-200 (SVTVLDFGSQ…LIDIAGIKPD (198 aa)). The active-site Nucleophile is the cysteine 80. Catalysis depends on residues histidine 174 and glutamate 176. A GMPS ATP-PPase domain is found at 201–388 (WSPKSFIGHQ…LGIAEDILMR (188 aa)). 228 to 234 (SGGVDST) serves as a coordination point for ATP.

As to quaternary structure, homodimer.

The catalysed reaction is XMP + L-glutamine + ATP + H2O = GMP + L-glutamate + AMP + diphosphate + 2 H(+). The protein operates within purine metabolism; GMP biosynthesis; GMP from XMP (L-Gln route): step 1/1. In terms of biological role, catalyzes the synthesis of GMP from XMP. This Chlorobium phaeobacteroides (strain DSM 266 / SMG 266 / 2430) protein is GMP synthase [glutamine-hydrolyzing].